The primary structure comprises 316 residues: Aspartate carbamoyltransferase catalytic subunit (316 aa).

Residues arginine 66 and threonine 67 each coordinate carbamoyl phosphate. Position 94 (lysine 94) interacts with L-aspartate. Residues arginine 116, histidine 146, and glutamine 149 each contribute to the carbamoyl phosphate site. L-aspartate-binding residues include arginine 180 and arginine 235. Carbamoyl phosphate-binding residues include glycine 276 and proline 277.

Belongs to the aspartate/ornithine carbamoyltransferase superfamily. ATCase family. In terms of assembly, heterododecamer (2C3:3R2) of six catalytic PyrB chains organized as two trimers (C3), and six regulatory PyrI chains organized as three dimers (R2).

It carries out the reaction carbamoyl phosphate + L-aspartate = N-carbamoyl-L-aspartate + phosphate + H(+). The protein operates within pyrimidine metabolism; UMP biosynthesis via de novo pathway; (S)-dihydroorotate from bicarbonate: step 2/3. In terms of biological role, catalyzes the condensation of carbamoyl phosphate and aspartate to form carbamoyl aspartate and inorganic phosphate, the committed step in the de novo pyrimidine nucleotide biosynthesis pathway. The chain is Aspartate carbamoyltransferase catalytic subunit from Stenotrophomonas maltophilia (strain K279a).